Here is a 272-residue protein sequence, read N- to C-terminus: Indole-3-glycerol phosphate synthase (272 aa).

This sequence belongs to the TrpC family.

It carries out the reaction 1-(2-carboxyphenylamino)-1-deoxy-D-ribulose 5-phosphate + H(+) = (1S,2R)-1-C-(indol-3-yl)glycerol 3-phosphate + CO2 + H2O. The protein operates within amino-acid biosynthesis; L-tryptophan biosynthesis; L-tryptophan from chorismate: step 4/5. This is Indole-3-glycerol phosphate synthase from Arthrobacter sp. (strain FB24).